Here is a 130-residue protein sequence, read N- to C-terminus: Small ribosomal subunit protein uS11 (130 aa).

This sequence belongs to the universal ribosomal protein uS11 family. In terms of assembly, part of the 30S ribosomal subunit. Interacts with proteins S7 and S18. Binds to IF-3.

Functionally, located on the platform of the 30S subunit, it bridges several disparate RNA helices of the 16S rRNA. Forms part of the Shine-Dalgarno cleft in the 70S ribosome. The polypeptide is Small ribosomal subunit protein uS11 (Campylobacter hominis (strain ATCC BAA-381 / DSM 21671 / CCUG 45161 / LMG 19568 / NCTC 13146 / CH001A)).